A 110-amino-acid chain; its full sequence is Small ribosomal subunit protein bS16 (110 aa).

Positions 84 to 110 are disordered; sequence KRAPRNNPEKAVPRKERKAAAEAAAKA. Residues 90 to 103 are compositionally biased toward basic and acidic residues; the sequence is NPEKAVPRKERKAA.

It belongs to the bacterial ribosomal protein bS16 family.

The chain is Small ribosomal subunit protein bS16 from Afipia carboxidovorans (strain ATCC 49405 / DSM 1227 / KCTC 32145 / OM5) (Oligotropha carboxidovorans).